Here is a 159-residue protein sequence, read N- to C-terminus: 17 kDa surface antigen (159 aa).

Residues 1-19 form the signal peptide; that stretch reads MKLLSKIMIIALATSMLQA. A lipid anchor (N-palmitoyl cysteine) is attached at cysteine 20. Cysteine 20 carries S-diacylglycerol cysteine lipidation.

It belongs to the rickettsiale 17 kDa surface antigen family.

It is found in the cell outer membrane. The sequence is that of 17 kDa surface antigen (omp) from Rickettsia conorii (strain ATCC VR-613 / Malish 7).